Here is a 736-residue protein sequence, read N- to C-terminus: ATP-dependent zinc metalloprotease FtsH (736 aa).

Disordered regions lie at residues 1 to 39 and 57 to 83; these read MDSNVDSQRVPDGQIFFRPVHPGISGKDMESGTSDGQQR and QQTQNRTGFASADTKQGSPEGADRKKM. Over 1–87 the chain is Cytoplasmic; that stretch reads MDSNVDSQRV…ADRKKMPPGK (87 aa). Positions 57 to 73 are enriched in polar residues; sequence QQTQNRTGFASADTKQG. Residues 88–108 form a helical membrane-spanning segment; that stretch reads AWLWFVLILIVNFLMVRLLIP. Topologically, residues 109–205 are periplasmic; that stretch reads DAEQPVMVPY…KPIHEERSPW (97 aa). The chain crosses the membrane as a helical span at residues 206–226; the sequence is ATIVYSFGPGLLFIAFYIWLF. Residues 227–736 lie on the Cytoplasmic side of the membrane; the sequence is RRMAQQGGLG…VSLPGVAGPS (510 aa). Residue 301–308 participates in ATP binding; it reads GAPGTGKT. Zn(2+) is bound at residue H522. E523 is a catalytic residue. Zn(2+) is bound by residues H526 and D598. The interval 706–736 is disordered; that stretch reads PALDAGKLPVPDGGDKNAEPSVSLPGVAGPS.

The protein in the central section; belongs to the AAA ATPase family. It in the C-terminal section; belongs to the peptidase M41 family. As to quaternary structure, homohexamer. It depends on Zn(2+) as a cofactor.

It is found in the cell inner membrane. Functionally, acts as a processive, ATP-dependent zinc metallopeptidase for both cytoplasmic and membrane proteins. Plays a role in the quality control of integral membrane proteins. The protein is ATP-dependent zinc metalloprotease FtsH of Syntrophus aciditrophicus (strain SB).